Consider the following 245-residue polypeptide: 4-hydroxy-tetrahydrodipicolinate reductase (245 aa).

Residues 7–12, 75–77, and 102–105 contribute to the NAD(+) site; these read GAKGKV, GTT, and APNF. The active-site Proton donor/acceptor is the His132. His133 is a (S)-2,3,4,5-tetrahydrodipicolinate binding site. The Proton donor role is filled by Lys136. 142–143 contributes to the (S)-2,3,4,5-tetrahydrodipicolinate binding site; the sequence is GT.

It belongs to the DapB family.

Its subcellular location is the cytoplasm. It carries out the reaction (S)-2,3,4,5-tetrahydrodipicolinate + NAD(+) + H2O = (2S,4S)-4-hydroxy-2,3,4,5-tetrahydrodipicolinate + NADH + H(+). The catalysed reaction is (S)-2,3,4,5-tetrahydrodipicolinate + NADP(+) + H2O = (2S,4S)-4-hydroxy-2,3,4,5-tetrahydrodipicolinate + NADPH + H(+). It participates in amino-acid biosynthesis; L-lysine biosynthesis via DAP pathway; (S)-tetrahydrodipicolinate from L-aspartate: step 4/4. Its function is as follows. Catalyzes the conversion of 4-hydroxy-tetrahydrodipicolinate (HTPA) to tetrahydrodipicolinate. This Mycobacterium ulcerans (strain Agy99) protein is 4-hydroxy-tetrahydrodipicolinate reductase.